Consider the following 167-residue polypeptide: Large ribosomal subunit protein uL10 (167 aa).

It belongs to the universal ribosomal protein uL10 family. Part of the ribosomal stalk of the 50S ribosomal subunit. The N-terminus interacts with L11 and the large rRNA to form the base of the stalk. The C-terminus forms an elongated spine to which L12 dimers bind in a sequential fashion forming a multimeric L10(L12)X complex.

Forms part of the ribosomal stalk, playing a central role in the interaction of the ribosome with GTP-bound translation factors. This Dichelobacter nodosus (strain VCS1703A) protein is Large ribosomal subunit protein uL10.